The chain runs to 97 residues: Protein GLUTAMINE DUMPER 7 (97 aa).

The Extracellular segment spans residues Met1–Lys25. The helical transmembrane segment at Ile26 to Ala46 threads the bilayer. Residues Cys47–Ala97 are Cytoplasmic-facing. A VIMAG motif is present at residues Val78 to Gly82.

The protein belongs to the GLUTAMINE DUMPER 1 (TC 9.B.60) family. As to expression, expressed in the vascular tissues, even in the minor veins of the leaves.

The protein resides in the membrane. Functionally, probable subunit of an amino acid transporter involved in the regulation of the amino acid metabolism. Stimulates amino acid export by activating nonselective amino acid facilitators. This is Protein GLUTAMINE DUMPER 7 (GDU7) from Arabidopsis thaliana (Mouse-ear cress).